The primary structure comprises 251 residues: Probable caffeoyl-CoA O-methyltransferase 3 (251 aa).

S-adenosyl-L-methionine is bound by residues T61, D83, 85 to 86, S91, D109, and A138; that span reads GV. D160 provides a ligand contact to a divalent metal cation. D162 contacts S-adenosyl-L-methionine. A divalent metal cation contacts are provided by D186 and N187.

This sequence belongs to the class I-like SAM-binding methyltransferase superfamily. Cation-dependent O-methyltransferase family. CCoAMT subfamily.

The enzyme catalyses (E)-caffeoyl-CoA + S-adenosyl-L-methionine = (E)-feruloyl-CoA + S-adenosyl-L-homocysteine + H(+). The protein is Probable caffeoyl-CoA O-methyltransferase 3 (omt1) of Dictyostelium discoideum (Social amoeba).